Reading from the N-terminus, the 187-residue chain is MLEHIEKELLEHQKTFEKVWEELRFHIYTASIICIEALKNQKKIMLCGNGGSAADAQHIAAELVGRFKKERRSLPAIALSVDTSALTAIGNDYGFELVFARQVEGLAQKGDVLIGISTSGESENVLRAMEEAKKRGCKTIGLLGKDGGRIKDLCDAAIVVPSSQTPRIQEMHIMIGHILCSLIDESF.

The SIS domain maps to 34-187 (CIEALKNQKK…ILCSLIDESF (154 aa)). Substrate is bound at residue 49–51 (NGG). 2 residues coordinate Zn(2+): His-58 and Glu-62. Substrate contacts are provided by residues Glu-62, 91–92 (ND), 117–119 (STS), Ser-122, and Gln-169. Zn(2+)-binding residues include Gln-169 and His-177.

It belongs to the SIS family. GmhA subfamily. Homotetramer. The cofactor is Zn(2+).

The protein resides in the cytoplasm. The catalysed reaction is 2 D-sedoheptulose 7-phosphate = D-glycero-alpha-D-manno-heptose 7-phosphate + D-glycero-beta-D-manno-heptose 7-phosphate. It participates in carbohydrate biosynthesis; D-glycero-D-manno-heptose 7-phosphate biosynthesis; D-glycero-alpha-D-manno-heptose 7-phosphate and D-glycero-beta-D-manno-heptose 7-phosphate from sedoheptulose 7-phosphate: step 1/1. In terms of biological role, catalyzes the isomerization of sedoheptulose 7-phosphate in D-glycero-D-manno-heptose 7-phosphate. The sequence is that of Phosphoheptose isomerase from Nitratiruptor sp. (strain SB155-2).